Here is a 2837-residue protein sequence, read N- to C-terminus: Bifunctional DNA-directed RNA polymerase subunit beta-beta' (2837 aa).

Residues 1–1433 (MVDSSYMYAS…CLNVDLKQND (1433 aa)) form a DNA-directed RNA polymerase subunit beta region. The segment at 1436 to 2837 (IEDISHTNIA…ESVVAYDQSN (1402 aa)) is DNA-directed RNA polymerase subunit beta'. Residues Cys1501, Cys1503, Cys1516, and Cys1519 each contribute to the Zn(2+) site. Asp1893, Asp1895, and Asp1897 together coordinate Mg(2+). Cys2235, Cys2309, Cys2316, and Cys2319 together coordinate Zn(2+).

The protein in the N-terminal section; belongs to the RNA polymerase beta chain family. It in the C-terminal section; belongs to the RNA polymerase beta' chain family. As to quaternary structure, the RNAP catalytic core consists of 2 alpha, 1 beta/beta' and 1 omega subunit. When a sigma factor is associated with the core the holoenzyme is formed, which can initiate transcription. Requires Mg(2+) as cofactor. The cofactor is Zn(2+).

The catalysed reaction is RNA(n) + a ribonucleoside 5'-triphosphate = RNA(n+1) + diphosphate. Functionally, DNA-dependent RNA polymerase catalyzes the transcription of DNA into RNA using the four ribonucleoside triphosphates as substrates. This Wolbachia pipientis wMel protein is Bifunctional DNA-directed RNA polymerase subunit beta-beta' (rpoBC).